We begin with the raw amino-acid sequence, 375 residues long: Fluoride export protein 1 (375 aa).

The Cytoplasmic segment spans residues 1–11 (MIFNPVISNHK). A helical membrane pass occupies residues 12–32 (LSHYIHVFCTFTTFCILGTET). The Extracellular segment spans residues 33–34 (RQ). A helical membrane pass occupies residues 35 to 55 (AITALSTYTPAFVTAPTVLWS). Over 56-79 (NCSSCMLMGIMQSLNAYTWMKDHQ) the chain is Cytoplasmic. Residues 80–100 (VLFLGVTTGYCGALSSFSSML) traverse the membrane as a helical segment. Residues 101 to 127 (LEMFEHSTNLTNGNIANHTKLPNRAYG) are Extracellular-facing. N109 and N117 each carry an N-linked (GlcNAc...) asparagine glycan. The chain crosses the membrane as a helical span at residues 128-148 (IMEFLSVLLVHLMVSMGSLIF). At 149–213 (GRQLGKEVIV…FKKFFDIVDK (65 aa)) the chain is on the cytoplasmic side. A helical transmembrane segment spans residues 214–234 (LAYALAFPLIILFVVLCAYYE). An N-linked (GlcNAc...) asparagine glycan is attached at N235. The Extracellular portion of the chain corresponds to 235–241 (NYSRGKW). The chain crosses the membrane as a helical span at residues 242 to 262 (TLPCLFGIFAGFLRYWLAEMF). Residues 263–268 (NKTNKK) are Cytoplasmic-facing. Residues 269–289 (FPLGTFLANVFATLLIGIFTM) form a helical membrane-spanning segment. The Extracellular segment spans residues 290–310 (VQRGKKHFSTDVPIVNSLNSC). Residues 311-331 (HIVSALISGFCGTLSTISTFI) form a helical membrane-spanning segment. Residues 332 to 338 (NEGYKLS) are Cytoplasmic-facing. Residues 339–359 (FINMLIYYTVSIAISYCLLVI) traverse the membrane as a helical segment. At 360 to 375 (TLGSYAWTRGLTNPIC) the chain is on the extracellular side.

Belongs to the fluoride channel Fluc/FEX (TC 1.A.43) family.

Its subcellular location is the cell membrane. The enzyme catalyses fluoride(in) = fluoride(out). In terms of biological role, fluoride channel required for the rapid expulsion of cytoplasmic fluoride. This is Fluoride export protein 1 from Saccharomyces cerevisiae (strain ATCC 204508 / S288c) (Baker's yeast).